A 132-amino-acid chain; its full sequence is Large-conductance mechanosensitive channel (132 aa).

The next 3 membrane-spanning stretches (helical) occupy residues 14–34 (VVDLAVGVVIGAAFGKIVSSL), 38–58 (IITPLLGMVLGGVNFTDLHFG), and 67–87 (GNFIQTIFDFLIIAASIFMFI).

This sequence belongs to the MscL family. In terms of assembly, homopentamer.

It is found in the cell membrane. In terms of biological role, channel that opens in response to stretch forces in the membrane lipid bilayer. May participate in the regulation of osmotic pressure changes within the cell. The protein is Large-conductance mechanosensitive channel of Bacillus cereus (strain G9842).